The chain runs to 176 residues: Glutathione-regulated potassium-efflux system ancillary protein KefF (176 aa).

Residues histidine 8, 14-17 (SHAN), 65-68 (MQWY), and 105-108 (TTGG) each bind FMN.

Belongs to the NAD(P)H dehydrogenase (quinone) family. KefF subfamily. As to quaternary structure, homodimer. Interacts with KefC. FMN serves as cofactor.

It localises to the cell inner membrane. The catalysed reaction is a quinone + NADH + H(+) = a quinol + NAD(+). The enzyme catalyses a quinone + NADPH + H(+) = a quinol + NADP(+). Regulatory subunit of a potassium efflux system that confers protection against electrophiles. Required for full activity of KefC. Shows redox enzymatic activity, but this enzymatic activity is not required for activation of KefC. This chain is Glutathione-regulated potassium-efflux system ancillary protein KefF, found in Salmonella dublin (strain CT_02021853).